We begin with the raw amino-acid sequence, 158 residues long: Toxin Tse2 (158 aa).

In terms of assembly, forms a heterotetramer with Tsi2 consisting of two Tse2 dimers and two Tsi2 dimers. Formation of the complex inactivates Tse2 enzymatic activity.

The protein localises to the secreted. Functionally, toxin secreted by the H1 type VI (H1-T6SS) secretion system into the cytoplasm of recipient cells. Acts likely as a NAD-dependent cytotoxin towards both prokaryotic and eukaryotic cells. This is Toxin Tse2 from Pseudomonas aeruginosa (strain ATCC 15692 / DSM 22644 / CIP 104116 / JCM 14847 / LMG 12228 / 1C / PRS 101 / PAO1).